A 369-amino-acid polypeptide reads, in one-letter code: Delta(12)-oleate desaturase (369 aa).

The next 2 membrane-spanning stretches (helical) occupy residues 41–61 (LLSD…YFPL) and 69–89 (IAWP…WVIA). Residues 90-94 (HECGH) carry the Histidine box-1 motif. The helical transmembrane segment at 102–122 (LIDDIVGLFFHSALLVPYFSW) threads the bilayer. The Histidine box-2 motif lies at 126–130 (HRRHH). A run of 3 helical transmembrane segments spans residues 164-184 (LISL…FNMS), 207-227 (WIQV…LYRI), and 234-254 (FWVM…LVLI). A Histidine box-3 motif is present at residues 300–304 (HVVHH).

It belongs to the fatty acid desaturase type 1 family.

The protein localises to the membrane. Its pathway is lipid metabolism; polyunsaturated fatty acid biosynthesis. Functionally, delta(12)-fatty acid desaturase producing in a heterologous system linoleic acid (18:2(9Z,12Z)) and to a lower extent hexadecadienoic acid (16:2(9Z,12Z)). The sequence is that of Delta(12)-oleate desaturase from Trichosanthes kirilowii (Chinese snake gourd).